Consider the following 226-residue polypeptide: Peroxynitrite isomerase (226 aa).

The GXWXGXG signature appears at 21-27 (GSWEGQG). Residue H191 participates in heme b binding. Residues 201–226 (SAAEGRLAPGAERPRGAGGRKQGEQS) are disordered.

This sequence belongs to the nitrobindin family. As to quaternary structure, homodimer. Heme b is required as a cofactor.

It carries out the reaction peroxynitrite = nitrate. It functions in the pathway nitrogen metabolism. Its function is as follows. Heme-binding protein able to scavenge peroxynitrite and to protect free L-tyrosine against peroxynitrite-mediated nitration, by acting as a peroxynitrite isomerase that converts peroxynitrite to nitrate. Therefore, this protein likely plays a role in peroxynitrite sensing and in the detoxification of reactive nitrogen and oxygen species (RNS and ROS, respectively). Is able to bind nitric oxide (NO) in vitro, but may act as a sensor of peroxynitrite levels in vivo. In Micrococcus luteus (strain ATCC 4698 / DSM 20030 / JCM 1464 / CCM 169 / CCUG 5858 / IAM 1056 / NBRC 3333 / NCIMB 9278 / NCTC 2665 / VKM Ac-2230) (Micrococcus lysodeikticus), this protein is Peroxynitrite isomerase.